The sequence spans 358 residues: Nicotinate-nucleotide--dimethylbenzimidazole phosphoribosyltransferase (358 aa).

Catalysis depends on Glu323, which acts as the Proton acceptor.

This sequence belongs to the CobT family.

The enzyme catalyses 5,6-dimethylbenzimidazole + nicotinate beta-D-ribonucleotide = alpha-ribazole 5'-phosphate + nicotinate + H(+). The protein operates within nucleoside biosynthesis; alpha-ribazole biosynthesis; alpha-ribazole from 5,6-dimethylbenzimidazole: step 1/2. Its function is as follows. Catalyzes the synthesis of alpha-ribazole-5'-phosphate from nicotinate mononucleotide (NAMN) and 5,6-dimethylbenzimidazole (DMB). This is Nicotinate-nucleotide--dimethylbenzimidazole phosphoribosyltransferase from Oleidesulfovibrio alaskensis (strain ATCC BAA-1058 / DSM 17464 / G20) (Desulfovibrio alaskensis).